The primary structure comprises 325 residues: Anthranilate phosphoribosyltransferase (325 aa).

5-phospho-alpha-D-ribose 1-diphosphate is bound by residues Gly73, 76-77 (GD), Thr81, 83-86 (NIST), 100-108 (KHGNVSITS), and Ser112. Residue Gly73 coordinates anthranilate. Ser85 lines the Mg(2+) pocket. Position 103 (Asn103) interacts with anthranilate. Arg158 contributes to the anthranilate binding site. Residues Asp216 and Glu217 each contribute to the Mg(2+) site.

Belongs to the anthranilate phosphoribosyltransferase family. In terms of assembly, homodimer. It depends on Mg(2+) as a cofactor.

It carries out the reaction N-(5-phospho-beta-D-ribosyl)anthranilate + diphosphate = 5-phospho-alpha-D-ribose 1-diphosphate + anthranilate. Its pathway is amino-acid biosynthesis; L-tryptophan biosynthesis; L-tryptophan from chorismate: step 2/5. Catalyzes the transfer of the phosphoribosyl group of 5-phosphorylribose-1-pyrophosphate (PRPP) to anthranilate to yield N-(5'-phosphoribosyl)-anthranilate (PRA). The polypeptide is Anthranilate phosphoribosyltransferase (Methanococcus aeolicus (strain ATCC BAA-1280 / DSM 17508 / OCM 812 / Nankai-3)).